The sequence spans 364 residues: Probable protein phosphatase methylesterase 1 (364 aa).

Residues 1 to 53 form a disordered region; the sequence is MSDDKLDTLPDLQSETSHVTTPHRQNDLLRQAVTHGRPPPVPSTSTSGKKREM. Residues 11–23 are compositionally biased toward polar residues; it reads DLQSETSHVTTPH. Catalysis depends on residues Ser164, Asp190, and His316.

It belongs to the AB hydrolase superfamily.

It carries out the reaction [phosphatase 2A protein]-C-terminal L-leucine methyl ester + H2O = [phosphatase 2A protein]-C-terminal L-leucine + methanol + H(+). In terms of biological role, demethylates proteins that have been reversibly carboxymethylated. This chain is Probable protein phosphatase methylesterase 1, found in Caenorhabditis elegans.